The chain runs to 158 residues: uncharacterized protein (158 aa).

The protein belongs to the mimivirus L223/L227/L812 family.

This is an uncharacterized protein from Acanthamoeba polyphaga mimivirus (APMV).